The primary structure comprises 176 residues: Small ribosomal subunit protein uS5 (176 aa).

One can recognise an S5 DRBM domain in the interval M14–I77.

This sequence belongs to the universal ribosomal protein uS5 family. As to quaternary structure, part of the 30S ribosomal subunit. Contacts proteins S4 and S8.

Functionally, with S4 and S12 plays an important role in translational accuracy. In terms of biological role, located at the back of the 30S subunit body where it stabilizes the conformation of the head with respect to the body. The protein is Small ribosomal subunit protein uS5 of Acidithiobacillus ferrooxidans (strain ATCC 23270 / DSM 14882 / CIP 104768 / NCIMB 8455) (Ferrobacillus ferrooxidans (strain ATCC 23270)).